The sequence spans 344 residues: MTTVLGIETSCDETGVGIARLDPDGTVTLLADEVASSVDEHVRFGGVVPEIASRAHLEALGPAMRRALAAAGLKQPDIVAATIGPGLAGALLVGVAAAKAYSAAWGVPFYAVNHLGGHLAADVYEHGPLPECVALLVSGGHTHLLHVRSLGEPIIELGSTVDDAAGEAYDKVARLLGLGYPGGKALDDLARTGDRDAIVFPRGMSGPADDRYAFSFSGLKTAVARYVESHAADPGFRTADIAAGFQEAVADVLTMKAVRAATALGVSTLLIAGGVAANSRLRELATQRCGEAGRTLRIPSPRLCTDNGAMIAAFAAQLVAAGAPPSPLDVPSDPGLPVMQGQVR.

The Fe cation site is built by His114 and His118. Substrate is bound by residues 136-140 (LVSGG), Asp170, Gly183, Asp187, and Asn278. Asp306 provides a ligand contact to Fe cation. A disordered region spans residues 325 to 344 (PSPLDVPSDPGLPVMQGQVR).

Belongs to the KAE1 / TsaD family. Fe(2+) is required as a cofactor.

The protein resides in the cytoplasm. It carries out the reaction L-threonylcarbamoyladenylate + adenosine(37) in tRNA = N(6)-L-threonylcarbamoyladenosine(37) in tRNA + AMP + H(+). In terms of biological role, required for the formation of a threonylcarbamoyl group on adenosine at position 37 (t(6)A37) in tRNAs that read codons beginning with adenine. Is involved in the transfer of the threonylcarbamoyl moiety of threonylcarbamoyl-AMP (TC-AMP) to the N6 group of A37, together with TsaE and TsaB. TsaD likely plays a direct catalytic role in this reaction. This chain is tRNA N6-adenosine threonylcarbamoyltransferase, found in Mycobacterium tuberculosis (strain ATCC 25177 / H37Ra).